A 709-amino-acid polypeptide reads, in one-letter code: Protein transport protein SEC39 (709 aa).

Belongs to the SEC39 family. In terms of assembly, component of a peripheral membrane protein complex consisting of DSL1, SEC39/DSL3 and TIP20. Bound to a SNARE complex consisting of UFE1, USE1, SEC20 and SEC22 or YKT6 through direct interaction of TIP20 with SEC20. Interacts with TIP20 and DSL1.

The protein resides in the endoplasmic reticulum membrane. Functionally, required for protein transport between the Golgi and the endoplasmic reticulum. May contribute to tethering of coatomer-coated retrograde transport vesicles to the ER membrane through interaction with and stabilization of the SNARE complex. In Saccharomyces cerevisiae (strain ATCC 204508 / S288c) (Baker's yeast), this protein is Protein transport protein SEC39.